The sequence spans 244 residues: RNA transcription, translation and transport factor protein (244 aa).

3 positions are modified to N6-acetyllysine: Lys-20, Lys-62, and Lys-98.

This sequence belongs to the RTRAF family. In terms of assembly, homodimer. Interacts with FAM98A (via N- and C-terminus). Interacts with NIN; which may prevent phosphorylation of NIN. Interacts with POLR2A. Component of a tRNA-splicing ligase complex.

The protein resides in the nucleus. It is found in the cytoplasm. Its subcellular location is the cytosol. It localises to the perinuclear region. The protein localises to the cytoskeleton. The protein resides in the microtubule organizing center. It is found in the centrosome. In terms of biological role, RNA-binding protein involved in modulation of mRNA transcription by Polymerase II. Component of the tRNA-splicing ligase complex and is required for tRNA ligation. May be required for RNA transport. This is RNA transcription, translation and transport factor protein from Mus musculus (Mouse).